A 402-amino-acid polypeptide reads, in one-letter code: Apolipoprotein L3 (402 aa).

It belongs to the apolipoprotein L family. In terms of tissue distribution, widely expressed; the highest levels are in prostate, lung and placenta; also detected in kidney, bone marrow, spleen, thymus, spinal cord, adrenal gland, salivary gland, trachea and mammary gland; levels are low in brain, heart, fetal liver, pancreas and testis.

The protein resides in the cytoplasm. Functionally, may affect the movement of lipids in the cytoplasm or allow the binding of lipids to organelles. The sequence is that of Apolipoprotein L3 (APOL3) from Homo sapiens (Human).